A 649-amino-acid polypeptide reads, in one-letter code: Protein mitoshell (649 aa).

Positions 167 to 176 are enriched in basic and acidic residues; sequence LRSEARKPRP. Disordered regions lie at residues 167–193, 389–414, and 485–512; these read LRSE…ESGA, HGPS…EPTS, and ALPS…VRSY. Residues 177–191 show a composition bias toward low complexity; the sequence is ESVVPEESSISSLES. Composition is skewed to polar residues over residues 393-414 and 485-503; these read AFST…EPTS and ALPS…SPQS.

Functionally, required for male meiotic cytokinesis through its involvement in the regulation of mitochondrial aggregation and fusion, astral spindle assembly and contractile ring formation. The chain is Protein mitoshell from Drosophila melanogaster (Fruit fly).